A 300-amino-acid chain; its full sequence is GTPase Era (300 aa).

The Era-type G domain occupies 7-182 (YCGFIAIVGR…LRKGVHHFPE (176 aa)). The G1 stretch occupies residues 15–22 (GRPNVGKS). Position 15–22 (15–22 (GRPNVGKS)) interacts with GTP. Residues 41-45 (QTTRH) are G2. The interval 62-65 (DTPG) is G3. GTP-binding positions include 62-66 (DTPGL) and 124-127 (NKVD). The interval 124–127 (NKVD) is G4. Residues 154–156 (ISA) are G5. One can recognise a KH type-2 domain in the interval 206–283 (TGEELPYSVT…HLELWVKVKS (78 aa)).

Belongs to the TRAFAC class TrmE-Era-EngA-EngB-Septin-like GTPase superfamily. Era GTPase family. As to quaternary structure, monomer.

The protein localises to the cytoplasm. It is found in the cell inner membrane. An essential GTPase that binds both GDP and GTP, with rapid nucleotide exchange. Plays a role in 16S rRNA processing and 30S ribosomal subunit biogenesis and possibly also in cell cycle regulation and energy metabolism. The chain is GTPase Era from Histophilus somni (strain 129Pt) (Haemophilus somnus).